Consider the following 330-residue polypeptide: MLDFLAITLSGKPPQVIQGETVNLKWQWLGEGILTLVPHRSYTQSVVISAGIHGNETAPIEILNQLVTDLLAGQLTLAVRLLVLLGNPPAIRKGKRYLSNDINRMFGGRYQHYTPSDETRRASTLEQRVMAFFQASHTSERLHYDLHTAIRGSYHPRFGLLPYQQTPYSAAMFRWLRDIELDALVMHTSAGGTFAHFSSERCQAASCTLELGKALPFGENQLSQFSAITQGLRSLVSDSALPARKTENMKYYRVVKSLLRQHPDFKLRGAEDTVNFTRFAQGTLLTEQPNDNYRVEHPYEWILFPNPHVALGLRAGMMLVKMCESELPIT.

The Zn(2+) site is built by H53, E56, and H147. E210 is an active-site residue.

This sequence belongs to the AspA/AstE family. Succinylglutamate desuccinylase subfamily. Requires Zn(2+) as cofactor.

The catalysed reaction is N-succinyl-L-glutamate + H2O = L-glutamate + succinate. The protein operates within amino-acid degradation; L-arginine degradation via AST pathway; L-glutamate and succinate from L-arginine: step 5/5. Functionally, transforms N(2)-succinylglutamate into succinate and glutamate. The protein is Succinylglutamate desuccinylase of Yersinia pseudotuberculosis serotype O:3 (strain YPIII).